Reading from the N-terminus, the 265-residue chain is Beta-lactamase SHV-4 (265 aa).

Ser-45 serves as the catalytic Acyl-ester intermediate. An intrachain disulfide couples Cys-52 to Cys-98. The Proton acceptor role is filled by Glu-143. 209-211 provides a ligand contact to substrate; it reads KTG.

This sequence belongs to the class-A beta-lactamase family.

The enzyme catalyses a beta-lactam + H2O = a substituted beta-amino acid. Functionally, SHV enzymes hydrolyze broad spectrum cephalosporins notably cefotaxime and ceftazidime. SHV-4 causes particularly high levels of resistance to aztreonam and ceftazidime. This Klebsiella pneumoniae protein is Beta-lactamase SHV-4 (bla).